Here is a 341-residue protein sequence, read N- to C-terminus: L-threonine 3-dehydrogenase (341 aa).

C38 serves as a coordination point for Zn(2+). Catalysis depends on charge relay system residues T40 and H43. Residues H63, E64, C93, C96, C99, and C107 each contribute to the Zn(2+) site. NAD(+) is bound by residues I175, D195, R200, 262–264 (LGI), and 286–287 (IY).

This sequence belongs to the zinc-containing alcohol dehydrogenase family. Homotetramer. The cofactor is Zn(2+).

The protein localises to the cytoplasm. The catalysed reaction is L-threonine + NAD(+) = (2S)-2-amino-3-oxobutanoate + NADH + H(+). It participates in amino-acid degradation; L-threonine degradation via oxydo-reductase pathway; glycine from L-threonine: step 1/2. Functionally, catalyzes the NAD(+)-dependent oxidation of L-threonine to 2-amino-3-ketobutyrate. The protein is L-threonine 3-dehydrogenase of Shewanella loihica (strain ATCC BAA-1088 / PV-4).